Here is a 639-residue protein sequence, read N- to C-terminus: Protein artemis (639 aa).

3 disordered regions span residues 450-496 (MDCT…LTSS), 515-570 (SELE…SQVD), and 590-617 (EAAELKSDSQVSSDFELPPTPGSKVPQP). Over residues 454–466 (ESNDDDDDEDDAA) the composition is skewed to acidic residues. Polar residues predominate over residues 518–537 (ENSQNTQTLSTENTASQSPE). Residues 548-560 (VHMSSSQSTHISD) show a composition bias toward low complexity.

Belongs to the DNA repair metallo-beta-lactamase (DRMBL) family.

The protein localises to the nucleus. Its function is as follows. May have a role in the processing of DNA double strand breaks (DSBs) prior to their repair by the non homologous end joining (NHEJ) pathway. Probably exhibits both exonuclease and endonuclease activity. This is Protein artemis (dclre1c) from Danio rerio (Zebrafish).